We begin with the raw amino-acid sequence, 252 residues long: Ubiquinone biosynthesis O-methyltransferase (252 aa).

Residues Arg-45, Gly-76, Asp-97, and Met-141 each contribute to the S-adenosyl-L-methionine site.

Belongs to the methyltransferase superfamily. UbiG/COQ3 family.

It catalyses the reaction a 3-demethylubiquinol + S-adenosyl-L-methionine = a ubiquinol + S-adenosyl-L-homocysteine + H(+). The enzyme catalyses a 3-(all-trans-polyprenyl)benzene-1,2-diol + S-adenosyl-L-methionine = a 2-methoxy-6-(all-trans-polyprenyl)phenol + S-adenosyl-L-homocysteine + H(+). It participates in cofactor biosynthesis; ubiquinone biosynthesis. Functionally, O-methyltransferase that catalyzes the 2 O-methylation steps in the ubiquinone biosynthetic pathway. This is Ubiquinone biosynthesis O-methyltransferase from Caulobacter sp. (strain K31).